The following is a 186-amino-acid chain: MGLKSDAWIRKMSHEKAMIVPFAEEQVGRGVVSYGVSSYGYDIRVGDEFKIFTNIGGTVVDPKNFDEKNVVDFKGDVCIVPPNSFALARTIEYFNMPDNVLAICLGKSTYARCGIIVNVTPFEPGFKGHITIEISNTTPLPAKIYANEGIAQVLFIEGDEPCEVTYADKKGKYQAQEGITLPRILK.

107–112 (KSTYAR) contacts dCTP. Glu133 serves as the catalytic Proton donor/acceptor. The dCTP site is built by Gln152, Tyr166, and Gln176.

The protein belongs to the dCTP deaminase family. Homotrimer.

The enzyme catalyses dCTP + H2O + H(+) = dUTP + NH4(+). Its pathway is pyrimidine metabolism; dUMP biosynthesis; dUMP from dCTP (dUTP route): step 1/2. Catalyzes the deamination of dCTP to dUTP. The chain is dCTP deaminase from Campylobacter curvus (strain 525.92).